A 303-amino-acid chain; its full sequence is Quinolinate synthase (303 aa).

Iminosuccinate is bound by residues H23 and S40. C85 is a [4Fe-4S] cluster binding site. Residues 111 to 113 (YVN) and S128 contribute to the iminosuccinate site. Residue C171 participates in [4Fe-4S] cluster binding. Residues 197–199 (HPE) and T214 each bind iminosuccinate. [4Fe-4S] cluster is bound at residue C259.

The protein belongs to the quinolinate synthase family. Type 2 subfamily. It depends on [4Fe-4S] cluster as a cofactor.

The protein localises to the cytoplasm. The enzyme catalyses iminosuccinate + dihydroxyacetone phosphate = quinolinate + phosphate + 2 H2O + H(+). It functions in the pathway cofactor biosynthesis; NAD(+) biosynthesis; quinolinate from iminoaspartate: step 1/1. In terms of biological role, catalyzes the condensation of iminoaspartate with dihydroxyacetone phosphate to form quinolinate. This is Quinolinate synthase from Thermodesulfovibrio yellowstonii (strain ATCC 51303 / DSM 11347 / YP87).